Consider the following 204-residue polypeptide: Probable calcium-binding protein CML46 (204 aa).

3 EF-hand domains span residues 72 to 106 (LEFQ…LGLS), 132 to 167 (PSLE…LGLK), and 170 to 204 (SNLE…NNFC). Residues Asp-145, Asn-147, Asp-149, and Asp-156 each coordinate Ca(2+).

In terms of biological role, potential calcium sensor. This Arabidopsis thaliana (Mouse-ear cress) protein is Probable calcium-binding protein CML46.